The primary structure comprises 1440 residues: SVAMKHLTSFKRELGTLIDAVNKRGRKQNKRGGNEGSIMWLASLAVVIACAGAMKLSNFQGKLLMTVNNTDIADVIVIPNPSKGENRCWVRAIDVGYMCEDTITYECPKLTMGNDPEDVDCWCDNQEVYVQYGRCTRTRHSKRSRRSVSVQTHGESSLVNKKEAWLDSTKATRYLMKTENWIVRNPGYAFLAAILGWMLGSNNGQRRWYFTILLLLVAPAYSFNCLGMGNRDFIEGASGATWVDLVLEGDSCLTIMANDKPTLDVRMINIEAVQLAEVRSYCYHASVTDISTVARCPTTGEAHNEKRADSSYVCKQGFTDRGWGNGCGLFGKGSIDTCAKFSCTSKAIGRTIQPENIKYEVGIFVHGTTTSENHGNYSAQVGASQAAKFTVTPNAPSITLKLGDYGEVTLDCEPRSGLNTEAFYVMTVGSKSFLVHREWFHDLALPWTPPSSTAWRNRELLMEFEEAHATKQSVVALGSQEGGLHQALAGAIVVEYSSSVKLTSGHLKCRLKMDKLALKGTTYGMCTEKFSFAKNPADTGHGTVVIELSYSGSDGPCKIPIVSVASLNDMTPVGRLVTVNPFVATSSANSKVLVEMEPPFGDSYIVVGRGDKQINHHWHKAGSTLGKAFSTTLKGAQRLAALGDTAWDFGSIGGVFNSIGKAVHQVFGGAFRTLFGGMSWITQGLMGALLLWMGVNARDRSIALAFLATGGVLVFLATNVHADTGCAIDITRKEMRCGSGIFVHNDVEAWVDRYKYLPETPRSLAKIVHKAHKEGVCGVRSVTRLEHQMWEAVRDELNVLLKENAVDLSVVVNKPVGRYRSAPKRLSMTQEKFEMGWKAWGKSILFAPELANSTFVVDGPETKECPDEHRAWNSIEIEDFGFGITSTRVWLKIREESTDECDGAIIGTAVKGHVAVHSDLSYWIESRYNDTWKLERAVFGEVKSCTWPETHTLWGDGVEESELIIPHTIAGPKSKHNRREGYKTQNQGPWDENGIVLDFDYCPGTKVTITEDCGKRGPSVRTTTDSGKLITDWCCRSCSLPPLRFRTENGCWYGMEIRPVRHDETTLVRSQVDAFNGEMVDPFQLGLLVMFLATQEVLRKRWTARLTIPAVLGALLVLMLGGITYTDLARYVVLVAAAFAEANSGGDVLHLALIAVFKIQPAFLVMNMLSTRWTNQENVVLVLGAAFFHLASVDLQIGVHGILNAAAIAWMIVRAITFPTTSSVTMPVLALLTPGMRALYLDTYRIILLVIGICSLLQERKKTMAKKKGAVLLGLALTSTGWFSPTTIAAGLMVCNPNKKRGWPATEFLSAVGLMFAIVGGLAELDIESMSIPFMLAGLMAVSYVVSGKATDMWLERAADISWEMDAAITGSSRRLDVKLDDDGDFHLIDDPGVPWKVWVLRMSCIGLAALTPWAIVPAAFGYWLTLKTTKRGGVFWDTP.

The propeptide at 32–53 (GGNEGSIMWLASLAVVIACAGA) is ER anchor for the capsid protein C, removed in mature form by serine protease NS3. The helical transmembrane segment at 36 to 56 (GSIMWLASLAVVIACAGAMKL) threads the bilayer. At 57-180 (SNFQGKLLMT…ATRYLMKTEN (124 aa)) the chain is on the extracellular side. Asn68 carries N-linked (GlcNAc...) asparagine; by host glycosylation. Residues 181 to 201 (WIVRNPGYAFLAAILGWMLGS) traverse the membrane as a helical segment. Topologically, residues 202-207 (NNGQRR) are cytoplasmic. A helical membrane pass occupies residues 208–222 (WYFTILLLLVAPAYS). The Extracellular portion of the chain corresponds to 223–674 (FNCLGMGNRD…QVFGGAFRTL (452 aa)). 6 disulfides stabilise this stretch: Cys225/Cys252, Cys282/Cys338, Cys282/Cys343, Cys296/Cys327, Cys314/Cys338, and Cys314/Cys343. The tract at residues 320–333 (DRGWGNGCGLFGKG) is fusion peptide. Asn376 is a glycosylation site (N-linked (GlcNAc...) asparagine; by host). 2 cysteine pairs are disulfide-bonded: Cys412/Cys509 and Cys526/Cys557. A helical transmembrane segment spans residues 675 to 695 (FGGMSWITQGLMGALLLWMGV). At 696–701 (NARDRS) the chain is on the cytoplasmic side. Residues 702–722 (IALAFLATGGVLVFLATNVHA) traverse the membrane as a helical segment. Residues 723 to 1147 (DTGCAIDITR…AFAEANSGGD (425 aa)) are Extracellular-facing. 6 disulfide bridges follow: Cys726–Cys737, Cys777–Cys865, Cys901–Cys945, Cys1002–Cys1051, Cys1013–Cys1034, and Cys1035–Cys1038. N-linked (GlcNAc...) asparagine; by host glycosylation is found at Asn852 and Asn929. Residues 1148-1168 (VLHLALIAVFKIQPAFLVMNM) traverse the membrane as a helical segment. The Cytoplasmic segment spans residues 1169 to 1178 (LSTRWTNQEN). The chain crosses the membrane as a helical span at residues 1179–1199 (VVLVLGAAFFHLASVDLQIGV). Residue His1200 is a topological domain, lumenal. Residues 1201 to 1221 (GILNAAAIAWMIVRAITFPTT) form a helical membrane-spanning segment. The Cytoplasmic portion of the chain corresponds to 1222 to 1237 (SSVTMPVLALLTPGMR). A helical transmembrane segment spans residues 1238-1258 (ALYLDTYRIILLVIGICSLLQ). Over 1259–1269 (ERKKTMAKKKG) the chain is Lumenal. A helical transmembrane segment spans residues 1270–1290 (AVLLGLALTSTGWFSPTTIAA). Residues 1291-1302 (GLMVCNPNKKRG) lie on the Cytoplasmic side of the membrane. A helical transmembrane segment spans residues 1303-1323 (WPATEFLSAVGLMFAIVGGLA). At 1324–1326 (ELD) the chain is on the lumenal side. A helical transmembrane segment spans residues 1327-1347 (IESMSIPFMLAGLMAVSYVVS). Residues 1348–1404 (GKATDMWLERAADISWEMDAAITGSSRRLDVKLDDDGDFHLIDDPGVPWKVWVLRMS) are Cytoplasmic-facing. The segment at 1355–1394 (LERAADISWEMDAAITGSSRRLDVKLDDDGDFHLIDDPGV) is interacts with and activates NS3 protease. The segment at residues 1405–1425 (CIGLAALTPWAIVPAAFGYWL) is an intramembrane region (helical). At 1426–1440 (TLKTTKRGGVFWDTP) the chain is on the cytoplasmic side.

As to quaternary structure, homodimer. Interacts (via N-terminus) with host EXOC1 (via C-terminus); this interaction results in EXOC1 degradation through the proteasome degradation pathway. Forms heterodimers with envelope protein E in the endoplasmic reticulum and Golgi. In terms of assembly, homodimer; in the endoplasmic reticulum and Golgi. Interacts with protein prM. Interacts with non-structural protein 1. As to quaternary structure, homodimer; Homohexamer when secreted. Interacts with envelope protein E. NS1 interacts with NS4B. Interacts with host complement protein CFH; this interaction leads to the degradation of C3. Interacts (via N-terminus) with serine protease NS3. In terms of assembly, forms a heterodimer with serine protease NS3. May form homooligomers. As to quaternary structure, forms a heterodimer with NS2B. Interacts with non-structural protein 2A (via N-terminus). Interacts with NS4B. Interacts with unphosphorylated RNA-directed RNA polymerase NS5; this interaction stimulates RNA-directed RNA polymerase NS5 guanylyltransferase activity. It depends on Mn(2+) as a cofactor. The cofactor is Mg(2+). Specific enzymatic cleavages in vivo yield mature proteins. Cleavages in the lumen of endoplasmic reticulum are performed by host signal peptidase, whereas cleavages in the cytoplasmic side are performed by serine protease NS3. Signal cleavage at the 2K-4B site requires a prior NS3 protease-mediated cleavage at the 4A-2K site. In terms of processing, cleaved in post-Golgi vesicles by a host furin, releasing the mature small envelope protein M, and peptide pr. This cleavage is incomplete as up to 30% of viral particles still carry uncleaved prM. Post-translationally, N-glycosylated. N-glycosylated. The excreted form is glycosylated and this is required for efficient secretion of the protein from infected cells. In terms of processing, RNA-directed RNA polymerase NS5: Phosphorylated on serines residues. This phosphorylation may trigger NS5 nuclear localization.

Its subcellular location is the virion. It is found in the host nucleus. It localises to the host cytoplasm. The protein localises to the host perinuclear region. The protein resides in the secreted. Its subcellular location is the virion membrane. It is found in the host endoplasmic reticulum membrane. The catalysed reaction is Selective hydrolysis of -Xaa-Xaa-|-Yaa- bonds in which each of the Xaa can be either Arg or Lys and Yaa can be either Ser or Ala.. It carries out the reaction a ribonucleoside 5'-triphosphate + H2O = a ribonucleoside 5'-diphosphate + phosphate + H(+). It catalyses the reaction ATP + H2O = ADP + phosphate + H(+). Its function is as follows. Plays a role in virus budding by binding to the cell membrane and gathering the viral RNA into a nucleocapsid that forms the core of a mature virus particle. During virus entry, may induce genome penetration into the host cytoplasm after hemifusion induced by the surface proteins. Can migrate to the cell nucleus where it modulates host functions. Overcomes the anti-viral effects of host EXOC1 by sequestering and degrading the latter through the proteasome degradation pathway. In terms of biological role, inhibits RNA silencing by interfering with host Dicer. Functionally, prevents premature fusion activity of envelope proteins in trans-Golgi by binding to envelope protein E at pH 6.0. After virion release in extracellular space, gets dissociated from E dimers. Acts as a chaperone for envelope protein E during intracellular virion assembly by masking and inactivating envelope protein E fusion peptide. prM is the only viral peptide matured by host furin in the trans-Golgi network probably to avoid catastrophic activation of the viral fusion activity in acidic Golgi compartment prior to virion release. prM-E cleavage is inefficient, and many virions are only partially matured. These uncleaved prM would play a role in immune evasion. Its function is as follows. May play a role in virus budding. Exerts cytotoxic effects by activating a mitochondrial apoptotic pathway through M ectodomain. May display a viroporin activity. In terms of biological role, binds to host cell surface receptor and mediates fusion between viral and cellular membranes. Envelope protein is synthesized in the endoplasmic reticulum in the form of heterodimer with protein prM. They play a role in virion budding in the ER, and the newly formed immature particle is covered with 60 spikes composed of heterodimer between precursor prM and envelope protein E. The virion is transported to the Golgi apparatus where the low pH causes dissociation of PrM-E heterodimers and formation of E homodimers. prM-E cleavage is inefficient, and many virions are only partially matured. These uncleaved prM would play a role in immune evasion. Functionally, involved in immune evasion, pathogenesis and viral replication. Once cleaved off the polyprotein, is targeted to three destinations: the viral replication cycle, the plasma membrane and the extracellular compartment. Essential for viral replication. Required for formation of the replication complex and recruitment of other non-structural proteins to the ER-derived membrane structures. Excreted as a hexameric lipoparticle that plays a role against host immune response. Antagonizing the complement function. Binds to the host macrophages and dendritic cells. Inhibits signal transduction originating from Toll-like receptor 3 (TLR3). Component of the viral RNA replication complex that functions in virion assembly and antagonizes the host alpha/beta interferon antiviral response. Its function is as follows. Required cofactor for the serine protease function of NS3. May have membrane-destabilizing activity and form viroporins. In terms of biological role, displays three enzymatic activities: serine protease, NTPase and RNA helicase. NS3 serine protease, in association with NS2B, performs its autocleavage and cleaves the polyprotein at dibasic sites in the cytoplasm: C-prM, NS2A-NS2B, NS2B-NS3, NS3-NS4A, NS4A-2K and NS4B-NS5. NS3 RNA helicase binds RNA and unwinds dsRNA in the 3' to 5' direction. Functionally, non-structural protein 4A: Regulates the ATPase activity of the NS3 helicase activity. NS4A allows NS3 helicase to conserve energy during unwinding. Peptide 2k: Functions as a signal peptide for NS4B and is required for the interferon antagonism activity of the latter. Its function is as follows. Non-structural protein 4B: Induces the formation of ER-derived membrane vesicles where the viral replication takes place. Inhibits interferon (IFN)-induced host STAT1 phosphorylation and nuclear translocation, thereby preventing the establishment of cellular antiviral state by blocking the IFN-alpha/beta pathway. Inhibits STAT2 translocation in the nucleus after IFN-alpha treatment. In terms of biological role, RNA-directed RNA polymerase NS5: Replicates the viral (+) and (-) RNA genome. Performs the capping of genomes in the cytoplasm. NS5 methylates viral RNA cap at guanine N-7 and ribose 2'-O positions. Besides its role in RNA genome replication, also prevents the establishment of cellular antiviral state by blocking the interferon-alpha/beta (IFN-alpha/beta) signaling pathway. Inhibits host TYK2 and STAT2 phosphorylation, thereby preventing activation of JAK-STAT signaling pathway. The polypeptide is Genome polyprotein (Japanese encephalitis virus (strain Nakayama) (JEV)).